Reading from the N-terminus, the 506-residue chain is Maturase K (506 aa).

This sequence belongs to the intron maturase 2 family. MatK subfamily.

It is found in the plastid. It localises to the chloroplast. Its function is as follows. Usually encoded in the trnK tRNA gene intron. Probably assists in splicing its own and other chloroplast group II introns. This Melilotus albus (White sweet clover) protein is Maturase K.